A 311-amino-acid chain; its full sequence is Malate dehydrogenase (311 aa).

Residues 7–13 (GAAGGIG) and aspartate 34 contribute to the NAD(+) site. Residues arginine 81 and arginine 87 each contribute to the substrate site. Residues asparagine 94 and 117 to 119 (ITN) each bind NAD(+). 2 residues coordinate substrate: asparagine 119 and arginine 153. Histidine 177 acts as the Proton acceptor in catalysis. An NAD(+)-binding site is contributed by methionine 227.

Belongs to the LDH/MDH superfamily. MDH type 1 family. In terms of assembly, homodimer.

The catalysed reaction is (S)-malate + NAD(+) = oxaloacetate + NADH + H(+). Functionally, catalyzes the reversible oxidation of malate to oxaloacetate. In Shewanella loihica (strain ATCC BAA-1088 / PV-4), this protein is Malate dehydrogenase.